A 414-amino-acid polypeptide reads, in one-letter code: Histidine--tRNA ligase (414 aa).

This sequence belongs to the class-II aminoacyl-tRNA synthetase family. Homodimer.

The protein localises to the cytoplasm. The enzyme catalyses tRNA(His) + L-histidine + ATP = L-histidyl-tRNA(His) + AMP + diphosphate + H(+). This chain is Histidine--tRNA ligase, found in Pelobacter propionicus (strain DSM 2379 / NBRC 103807 / OttBd1).